A 209-amino-acid polypeptide reads, in one-letter code: Probable glutathione peroxidase 8-B (209 aa).

A helical transmembrane segment spans residues 18–40; sequence VFLVFFSMVLCTGILCVLQLKFL. Cys-79 is an active-site residue.

Belongs to the glutathione peroxidase family.

It localises to the membrane. It carries out the reaction 2 glutathione + H2O2 = glutathione disulfide + 2 H2O. The sequence is that of Probable glutathione peroxidase 8-B (gpx8-b) from Xenopus laevis (African clawed frog).